Here is a 259-residue protein sequence, read N- to C-terminus: MTDPIADSVAPDLLDEPRLVVEPGVAARFGAVAEPVLLAMGYRLVRIKVSAEAGCTVQIMAERPDGTMLIEDCEAVSKALSPVLDVTDPIEKAYRLEISSPGIDRPLVRRSDFARYSGHLVKIEMAVPHQGRKRYRGLLDGVEGDAIRIQREGVKDEDPLVLLPMHDIGDARLVLTDELIAESMRRGKQAERELKQSLGLAPPPPPHAKRSDPKKSNAPKPKPKPPVKAAAKPKPTNTKQHRLAAGRSRRGDTDLSEGD.

A compositionally biased stretch (basic and acidic residues) spans 186–195 (RGKQAERELK). The interval 186–259 (RGKQAERELK…RGDTDLSEGD (74 aa)) is disordered. The segment covering 239–248 (KQHRLAAGRS) has biased composition (basic residues).

Belongs to the RimP family.

It localises to the cytoplasm. Functionally, required for maturation of 30S ribosomal subunits. The polypeptide is Ribosome maturation factor RimP (Rhodopseudomonas palustris (strain HaA2)).